We begin with the raw amino-acid sequence, 64 residues long: Small ribosomal subunit protein bS21 (64 aa).

This sequence belongs to the bacterial ribosomal protein bS21 family.

The chain is Small ribosomal subunit protein bS21 from Neorickettsia sennetsu (strain ATCC VR-367 / Miyayama) (Ehrlichia sennetsu).